The chain runs to 605 residues: Sulfite reductase [NADPH] flavoprotein alpha-component (605 aa).

One can recognise a Flavodoxin-like domain in the interval 70 to 208 (LTIIYASQTG…PAAEWRVKAL (139 aa)). FMN-binding positions include 76 to 81 (SQTGNA), 123 to 126 (STHG), and 159 to 168 (LGDSSYEFFC). One can recognise an FAD-binding FR-type domain in the interval 240–454 (QNPYEATLLT…VEENNNFKLP (215 aa)). Residues Thr-328, Gly-362, 392-395 (RLYS), 410-412 (TVG), and 425-428 (GGAS) each bind FAD. Residues 525–526 (SR), 531–535 (KVYVQ), and Asp-567 contribute to the NADP(+) site. Residue Tyr-605 coordinates FAD.

It belongs to the NADPH-dependent sulphite reductase flavoprotein subunit CysJ family. This sequence in the N-terminal section; belongs to the flavodoxin family. In the C-terminal section; belongs to the flavoprotein pyridine nucleotide cytochrome reductase family. As to quaternary structure, alpha(8)-beta(8). The alpha component is a flavoprotein, the beta component is a hemoprotein. FAD serves as cofactor. Requires FMN as cofactor.

It carries out the reaction hydrogen sulfide + 3 NADP(+) + 3 H2O = sulfite + 3 NADPH + 4 H(+). The protein operates within sulfur metabolism; hydrogen sulfide biosynthesis; hydrogen sulfide from sulfite (NADPH route): step 1/1. Component of the sulfite reductase complex that catalyzes the 6-electron reduction of sulfite to sulfide. This is one of several activities required for the biosynthesis of L-cysteine from sulfate. The flavoprotein component catalyzes the electron flow from NADPH -&gt; FAD -&gt; FMN to the hemoprotein component. The chain is Sulfite reductase [NADPH] flavoprotein alpha-component from Photobacterium profundum (strain SS9).